The chain runs to 148 residues: Large ribosomal subunit protein uL15 (148 aa).

The tract at residues 1 to 46 (MITIEDLKPTPGSNKKYKRLGRGQGSGKGKTAGKGHKGQKSRGTGK) is disordered. Over residues 31–45 (TAGKGHKGQKSRGTG) the composition is skewed to basic residues.

Belongs to the universal ribosomal protein uL15 family. As to quaternary structure, part of the 50S ribosomal subunit.

In terms of biological role, binds to the 23S rRNA. This is Large ribosomal subunit protein uL15 from Fervidobacterium nodosum (strain ATCC 35602 / DSM 5306 / Rt17-B1).